The sequence spans 130 residues: Small ribosomal subunit protein uS8 (130 aa).

This sequence belongs to the universal ribosomal protein uS8 family. In terms of assembly, part of the 30S ribosomal subunit.

One of the primary rRNA binding proteins, it binds directly to 16S rRNA central domain where it helps coordinate assembly of the platform of the 30S subunit. The chain is Small ribosomal subunit protein uS8 from Pyrobaculum islandicum (strain DSM 4184 / JCM 9189 / GEO3).